Reading from the N-terminus, the 203-residue chain is Small ribosomal subunit protein uS5 (203 aa).

One can recognise an S5 DRBM domain in the interval 51 to 114 (LEDEVLDITM…ENAKLNVVRI (64 aa)).

This sequence belongs to the universal ribosomal protein uS5 family. Part of the 30S ribosomal subunit. Contacts protein S4.

With S4 and S12 plays an important role in translational accuracy. This chain is Small ribosomal subunit protein uS5, found in Methanothrix thermoacetophila (strain DSM 6194 / JCM 14653 / NBRC 101360 / PT) (Methanosaeta thermophila).